Reading from the N-terminus, the 393-residue chain is uncharacterized protein (393 aa).

67-74 contacts ATP; the sequence is GPDGMGKS.

This is an uncharacterized protein from Mycobacterium tuberculosis (strain CDC 1551 / Oshkosh).